Reading from the N-terminus, the 178-residue chain is Translation initiation factor IF-3 (178 aa).

Positions 1-20 are disordered; the sequence is MRRPFKTDAPVKDGPRSNRE.

The protein belongs to the IF-3 family. Monomer.

Its subcellular location is the cytoplasm. IF-3 binds to the 30S ribosomal subunit and shifts the equilibrium between 70S ribosomes and their 50S and 30S subunits in favor of the free subunits, thus enhancing the availability of 30S subunits on which protein synthesis initiation begins. This chain is Translation initiation factor IF-3, found in Rhizobium leguminosarum bv. trifolii (strain WSM2304).